Here is a 274-residue protein sequence, read N- to C-terminus: Probable endonuclease LCL3 (274 aa).

The chain crosses the membrane as a helical span at residues Ala15–Tyr32. Residues His53–Gln261 form the TNase-like domain. Arg151 is a catalytic residue. Position 156 (Asp156) interacts with Ca(2+). Active-site residues include Glu159 and Arg199.

The protein belongs to the LCL3 family.

The protein localises to the mitochondrion. The protein resides in the membrane. The protein is Probable endonuclease LCL3 (LCL3) of Saccharomyces cerevisiae (strain Lalvin EC1118 / Prise de mousse) (Baker's yeast).